Here is a 345-residue protein sequence, read N- to C-terminus: Telomere-binding protein cav (345 aa).

The segment at 115 to 337 (RRKMVQPYPE…TITFQNTESE (223 aa)) is required for binding to Su(var)205. Disordered stretches follow at residues 145–180 (RLDR…HEDQ) and 200–231 (PPGV…INRP). Short sequence motifs (su(var)205-binding Pro-containing repeat) lie at residues 231-237 (PETEINE) and 298-304 (PETEMNE).

Component of the HipHop-HOAP telomere capping complex, composed of at least HipHop and cav/HOAP, and may include Su(var)205/HP1; HipHop and cav/HOAP, but not Su(var)205, are interdependent for their protein stability. Interacts with HipHop (via N-terminus). Interacts (via C-terminus) with Su(var)205/HP1 dimer (via hinge and chromoshadow domain) and Orc1; possibly interacts with other components of the origin recognition complex (ORC). Each molecule of cav/HOAP interacts with 2 molecules of Su(var)205/HP1. The HipHop-HOAP complex recruits the MTV complex, consisting of moi/modigliani, tea and ver/verrocchio, to telomeres, forming the terminin telomere-capping complex. Interacts with moi/modigliani; the interaction is direct. Interacts with ver/verrochio; the interaction is direct. Interacts with HP6, which is also part of the terminin complex. Interacts (via N-terminus) with peo/pendolino (via N-terminus); the interaction is direct.

It localises to the nucleus. The protein resides in the chromosome. It is found in the telomere. In terms of biological role, part of the HipHop-HOAP complex that recruits the MTV complex to form the terminin telomere-capping complex, which binds to chromosome ends in a sequence-independent manner and prevents telomere fusion. Telomere capping is independent of the origin recognition complex (ORC). The sequence is that of Telomere-binding protein cav from Drosophila melanogaster (Fruit fly).